Consider the following 239-residue polypeptide: ATP-dependent dethiobiotin synthetase BioD (239 aa).

Residue 15 to 20 (EIGKTF) coordinates ATP. Threonine 19 serves as a coordination point for Mg(2+). Residue lysine 40 is part of the active site. ATP contacts are provided by residues aspartate 57, 118-121 (EGVG), and 178-179 (NH). Mg(2+)-binding residues include aspartate 57 and glutamate 118.

The protein belongs to the dethiobiotin synthetase family. As to quaternary structure, homodimer. Mg(2+) serves as cofactor.

The protein localises to the cytoplasm. The enzyme catalyses (7R,8S)-7,8-diammoniononanoate + CO2 + ATP = (4R,5S)-dethiobiotin + ADP + phosphate + 3 H(+). It participates in cofactor biosynthesis; biotin biosynthesis; biotin from 7,8-diaminononanoate: step 1/2. In terms of biological role, catalyzes a mechanistically unusual reaction, the ATP-dependent insertion of CO2 between the N7 and N8 nitrogen atoms of 7,8-diaminopelargonic acid (DAPA, also called 7,8-diammoniononanoate) to form a ureido ring. The chain is ATP-dependent dethiobiotin synthetase BioD from Burkholderia ambifaria (strain ATCC BAA-244 / DSM 16087 / CCUG 44356 / LMG 19182 / AMMD) (Burkholderia cepacia (strain AMMD)).